The chain runs to 956 residues: Netrin receptor UNC5D (956 aa).

The signal sequence occupies residues 1–30 (MGTGAADGSRGARRWLPWLGLFFWAAGAAA). The Extracellular segment spans residues 31 to 382 (ARGADGSEIL…SRRGIENASD (352 aa)). The 98-residue stretch at 52–149 (PHFIEEPEDA…LGTSKSRKAS (98 aa)) folds into the Ig-like domain. Disulfide bonds link Cys73/Cys134, Cys85/Cys132, Cys178/Cys229, Cys262/Cys299, Cys266/Cys303, Cys277/Cys289, Cys318/Cys352, Cys322/Cys357, and Cys330/Cys342. Residues 89–91 (WVH) form an important for interaction with FLRT2 region. Asn115 and Asn226 each carry an N-linked (GlcNAc...) asparagine glycan. In terms of domain architecture, Ig-like C2-type spans 151–242 (RIAYLRKNFE…NIVAKRRSLS (92 aa)). TSP type-1 domains lie at 250 to 304 (NGGW…ALCP) and 306 to 358 (DGSW…GLCI). Asn351 and Asn379 each carry an N-linked (GlcNAc...) asparagine glycan. Residues 383–403 (IALYSGLGAAVVAVAVLVIGV) traverse the membrane as a helical segment. Topologically, residues 404–956 (TLYRRSHSDY…DFNYSRQNGL (553 aa)) are cytoplasmic. The ZU5 domain occupies 545–685 (LRTTGVFGHL…FGTYALTGEP (141 aa)). Positions 862–939 (QRICATFDTP…RTHTKLSNIT (78 aa)) constitute a Death domain.

Belongs to the unc-5 family. Interacts (via extracellular domain) with FLRT2 and FLRT3 (via extracellular domain); the interaction is direct. Has higher affinity for FLRT2. Identified in a complex with FLRT3 and ADGRL3; does not interact with ADGRL3 by itself. Post-translationally, proteolytically cleaved by caspases during apoptosis. The cleavage does not take place when the receptor is associated with netrin ligand. Its cleavage by caspases is required to induce apoptosis. As to expression, detected in multipolar cells in the brain subventricular zone (at protein level). Detected in embryonic brain neocortex, especially in the subventricular zone. Detected in multipolar cells in the brain subventricular zone. Detected in brain neocortex from young pups, especially in the somatosensory cortex. Expressed in developing limb and mammary gland.

The protein resides in the cell membrane. Its function is as follows. Receptor for the netrin NTN4 that promotes neuronal cell survival. Plays a role in cell-cell adhesion and cell guidance. Receptor for netrin involved in cell migration. Plays a role in the regulation of neuronal cell migration in the developing brain via its interaction with FLRT2. Plays a role in axon guidance by mediating axon repulsion of neuronal growth cones in the developing nervous system upon ligand binding. May play a role in apoptosis in response to DNA damage. It also acts as a dependence receptor required for apoptosis induction when not associated with netrin ligand. Mediates cell-cell adhesion via its interaction with FLRT3 on an adjacent cell. This Mus musculus (Mouse) protein is Netrin receptor UNC5D (Unc5d).